The chain runs to 205 residues: Adenylyl-sulfate kinase (205 aa).

Residue 31-38 (GLSGAGKS) coordinates ATP. Ser105 functions as the Phosphoserine intermediate in the catalytic mechanism.

It belongs to the APS kinase family.

It carries out the reaction adenosine 5'-phosphosulfate + ATP = 3'-phosphoadenylyl sulfate + ADP + H(+). The protein operates within sulfur metabolism; hydrogen sulfide biosynthesis; sulfite from sulfate: step 2/3. Functionally, catalyzes the synthesis of activated sulfate. This chain is Adenylyl-sulfate kinase, found in Shewanella sp. (strain MR-7).